Consider the following 173-residue polypeptide: Putative metal-dependent hydrolase BT9727_2476 (173 aa).

Zn(2+)-binding residues include His65, His156, and His160.

The protein belongs to the metal hydrolase YfiT family. As to quaternary structure, homodimer. Zn(2+) is required as a cofactor.

It localises to the cytoplasm. Possible metal-dependent hydrolase. This Bacillus thuringiensis subsp. konkukian (strain 97-27) protein is Putative metal-dependent hydrolase BT9727_2476.